The sequence spans 374 residues: Chaperone protein DnaJ (374 aa).

Residues 5–70 (DFYEILGVGK…QKRDAYDRYG (66 aa)) enclose the J domain. Residues 29–50 (AMKHHPDRNPDSKGAEDKFKEA) are disordered. A compositionally biased stretch (basic and acidic residues) spans 35-50 (DRNPDSKGAEDKFKEA). The segment at 134-212 (GYDTTIRVPS…CSGAGKIKRN (79 aa)) adopts a CR-type zinc-finger fold. Zn(2+)-binding residues include C147, C150, C164, C167, C186, C189, C200, and C203. 4 CXXCXGXG motif repeats span residues 147–154 (CETCDGSG), 164–171 (CTTCGGHG), 186–193 (CPKCHGSG), and 200–207 (CGTCSGAG).

Belongs to the DnaJ family. As to quaternary structure, homodimer. It depends on Zn(2+) as a cofactor.

The protein localises to the cytoplasm. In terms of biological role, participates actively in the response to hyperosmotic and heat shock by preventing the aggregation of stress-denatured proteins and by disaggregating proteins, also in an autonomous, DnaK-independent fashion. Unfolded proteins bind initially to DnaJ; upon interaction with the DnaJ-bound protein, DnaK hydrolyzes its bound ATP, resulting in the formation of a stable complex. GrpE releases ADP from DnaK; ATP binding to DnaK triggers the release of the substrate protein, thus completing the reaction cycle. Several rounds of ATP-dependent interactions between DnaJ, DnaK and GrpE are required for fully efficient folding. Also involved, together with DnaK and GrpE, in the DNA replication of plasmids through activation of initiation proteins. This Janthinobacterium sp. (strain Marseille) (Minibacterium massiliensis) protein is Chaperone protein DnaJ.